The primary structure comprises 376 residues: Protein insensitive (376 aa).

A coiled-coil region spans residues 50–79 (QVEVENRALRDKVRYLEAKLQQHKDLLSQI). The region spanning 258-356 (GPNNTCVPAS…TKCADENKMM (99 aa)) is the BEN domain.

Homodimer. Interacts (via BEN domain) with Su(H). Interacts with Cp190.

The protein localises to the nucleus. Its function is as follows. Can act as both a transcriptional repressor and corepressor. Represses the expression of genes involved in neural development and preferentially binds palindromic sequence 5'-CCAATTGG-3' to mediate transcriptional repression. Acts as a corepressor for suppressor of hairless (Su(H)) and inhibits Notch signaling during peripheral nervous system development. The sequence is that of Protein insensitive (insv) from Drosophila melanogaster (Fruit fly).